A 256-amino-acid polypeptide reads, in one-letter code: MPIFYGTEVTSRLMLGTAQYPSPAILADAFRRSDAGIATVSVRREAGGDQAGQDFWGLIRDLGVAVLPNTAGCYSVREAVTTAQMARELFDTNWIKLEVIGHTDTLQPDPFGLVEAAAQLAEDGFEVFPYCTEDLVLCERLVEVGCKVLMPWGAPIGTGLGLNNIYGLRSLRAHFPDTPLVVDAGLGLPSHATQAMELGYDAVLLNTAVSKAGDPAAMAHAFALAVEAGALAAGADPMDARDMAAPSTPVFGKAML.

The active-site Schiff-base intermediate with DXP is the K96. 1-deoxy-D-xylulose 5-phosphate is bound by residues G157, 184–185 (AG), and 206–207 (NT).

It belongs to the ThiG family. In terms of assembly, homotetramer. Forms heterodimers with either ThiH or ThiS.

The protein resides in the cytoplasm. The catalysed reaction is [ThiS sulfur-carrier protein]-C-terminal-Gly-aminoethanethioate + 2-iminoacetate + 1-deoxy-D-xylulose 5-phosphate = [ThiS sulfur-carrier protein]-C-terminal Gly-Gly + 2-[(2R,5Z)-2-carboxy-4-methylthiazol-5(2H)-ylidene]ethyl phosphate + 2 H2O + H(+). Its pathway is cofactor biosynthesis; thiamine diphosphate biosynthesis. In terms of biological role, catalyzes the rearrangement of 1-deoxy-D-xylulose 5-phosphate (DXP) to produce the thiazole phosphate moiety of thiamine. Sulfur is provided by the thiocarboxylate moiety of the carrier protein ThiS. In vitro, sulfur can be provided by H(2)S. This is Thiazole synthase from Roseobacter denitrificans (strain ATCC 33942 / OCh 114) (Erythrobacter sp. (strain OCh 114)).